The following is a 464-amino-acid chain: Probable pectin lyase F (464 aa).

Residues 1–20 form the signal peptide; it reads MAIIRSVIAATALLGAAVNA. An intrachain disulfide couples Cys-80 to Cys-103. A glycan (N-linked (GlcNAc...) asparagine) is linked at Asn-126. Arg-252 is an active-site residue. Cysteines 319 and 327 form a disulfide. The disordered stretch occupies residues 424–464; it reads EHEVSTPAVPTPTPVPSSVGSHGSTAGSSHPPAFSRTSFES. Residues 439–448 are compositionally biased toward low complexity; the sequence is PSSVGSHGST.

Belongs to the polysaccharide lyase 1 family.

The protein localises to the secreted. The enzyme catalyses Eliminative cleavage of (1-&gt;4)-alpha-D-galacturonan methyl ester to give oligosaccharides with 4-deoxy-6-O-methyl-alpha-D-galact-4-enuronosyl groups at their non-reducing ends.. In terms of biological role, pectinolytic enzymes consist of four classes of enzymes: pectin lyase, polygalacturonase, pectin methylesterase and rhamnogalacturonase. Among pectinolytic enzymes, pectin lyase is the most important in depolymerization of pectin, since it cleaves internal glycosidic bonds of highly methylated pectins. This chain is Probable pectin lyase F (pelF), found in Emericella nidulans (strain FGSC A4 / ATCC 38163 / CBS 112.46 / NRRL 194 / M139) (Aspergillus nidulans).